Consider the following 215-residue polypeptide: Adenylate kinase (215 aa).

Glycine 10–threonine 15 is a binding site for ATP. Positions serine 30–valine 59 are NMP. AMP contacts are provided by residues threonine 31, arginine 36, glutamate 57–valine 59, glycine 85–arginine 88, and glutamine 92. Residues glycine 126–aspartate 163 are LID. Arginine 127 serves as a coordination point for ATP. Residues cysteine 130 and cysteine 133 each contribute to the Zn(2+) site. ATP is bound at residue threonine 136 to tyrosine 137. The Zn(2+) site is built by cysteine 150 and aspartate 153. Positions 160 and 171 each coordinate AMP. Lysine 199 serves as a coordination point for ATP.

It belongs to the adenylate kinase family. As to quaternary structure, monomer.

Its subcellular location is the cytoplasm. It catalyses the reaction AMP + ATP = 2 ADP. It participates in purine metabolism; AMP biosynthesis via salvage pathway; AMP from ADP: step 1/1. Its function is as follows. Catalyzes the reversible transfer of the terminal phosphate group between ATP and AMP. Plays an important role in cellular energy homeostasis and in adenine nucleotide metabolism. The sequence is that of Adenylate kinase from Staphylococcus epidermidis (strain ATCC 35984 / DSM 28319 / BCRC 17069 / CCUG 31568 / BM 3577 / RP62A).